The following is a 101-amino-acid chain: MRVIVFFDLPVITPENRHNYSVFRKYLIKSGFIMQQKSVYSKLVLNLTNRDSIVKSIEKNKPPEGLVEVLTVTEKQYAKMEIIIGESKTEYLNTDERLVVL.

D8 provides a ligand contact to Mg(2+).

Belongs to the CRISPR-associated endoribonuclease Cas2 protein family. As to quaternary structure, homodimer, forms a heterotetramer with a Cas1 homodimer. It depends on Mg(2+) as a cofactor.

CRISPR (clustered regularly interspaced short palindromic repeat), is an adaptive immune system that provides protection against mobile genetic elements (viruses, transposable elements and conjugative plasmids). CRISPR clusters contain sequences complementary to antecedent mobile elements and target invading nucleic acids. CRISPR clusters are transcribed and processed into CRISPR RNA (crRNA). Functions as a ssRNA-specific endoribonuclease. Involved in the integration of spacer DNA into the CRISPR cassette. This chain is CRISPR-associated endoribonuclease Cas2, found in Treponema denticola (strain ATCC 35405 / DSM 14222 / CIP 103919 / JCM 8153 / KCTC 15104).